A 410-amino-acid polypeptide reads, in one-letter code: Bifunctional enzyme IspD/IspF (410 aa).

Positions 1–257 (MSHDPVVPSA…AGAGSASSRL (257 aa)) are 2-C-methyl-D-erythritol 4-phosphate cytidylyltransferase. The tract at residues 258–410 (RSGIGTDVHA…AVATALVERL (153 aa)) is 2-C-methyl-D-erythritol 2,4-cyclodiphosphate synthase. 2 residues coordinate a divalent metal cation: aspartate 264 and histidine 266. Residues 264–266 (DVH) and 290–291 (HS) contribute to the 4-CDP-2-C-methyl-D-erythritol 2-phosphate site. Position 298 (histidine 298) interacts with a divalent metal cation. Residues 312–314 (DIG), 385–388 (TTTD), phenylalanine 392, and arginine 395 contribute to the 4-CDP-2-C-methyl-D-erythritol 2-phosphate site.

The protein in the N-terminal section; belongs to the IspD/TarI cytidylyltransferase family. IspD subfamily. In the C-terminal section; belongs to the IspF family. A divalent metal cation serves as cofactor.

It catalyses the reaction 2-C-methyl-D-erythritol 4-phosphate + CTP + H(+) = 4-CDP-2-C-methyl-D-erythritol + diphosphate. It carries out the reaction 4-CDP-2-C-methyl-D-erythritol 2-phosphate = 2-C-methyl-D-erythritol 2,4-cyclic diphosphate + CMP. Its pathway is isoprenoid biosynthesis; isopentenyl diphosphate biosynthesis via DXP pathway; isopentenyl diphosphate from 1-deoxy-D-xylulose 5-phosphate: step 2/6. It functions in the pathway isoprenoid biosynthesis; isopentenyl diphosphate biosynthesis via DXP pathway; isopentenyl diphosphate from 1-deoxy-D-xylulose 5-phosphate: step 4/6. Functionally, bifunctional enzyme that catalyzes the formation of 4-diphosphocytidyl-2-C-methyl-D-erythritol from CTP and 2-C-methyl-D-erythritol 4-phosphate (MEP) (IspD), and catalyzes the conversion of 4-diphosphocytidyl-2-C-methyl-D-erythritol 2-phosphate (CDP-ME2P) to 2-C-methyl-D-erythritol 2,4-cyclodiphosphate (ME-CPP) with a corresponding release of cytidine 5-monophosphate (CMP) (IspF). The polypeptide is Bifunctional enzyme IspD/IspF (Clavibacter michiganensis subsp. michiganensis (strain NCPPB 382)).